The chain runs to 638 residues: Protein disulfide-isomerase A4 (638 aa).

An N-terminal signal peptide occupies residues 1 to 20 (MKLRKAWLLVLLLALTQLLA). Thioredoxin domains lie at 21-162 (AASA…EVSQ) and 162-294 (QPDW…EFLK). The interval 24–50 (AGDAHEDTSDTENATEEEEEEDDDDLE) is disordered. The segment covering 32–50 (SDTENATEEEEEEDDDDLE) has biased composition (acidic residues). N-linked (GlcNAc...) asparagine glycosylation is present at Asn-36. The short motif at 84–87 (CGHC) is the CXXC element. Disulfide bonds link Cys-84-Cys-87 and Cys-199-Cys-202. At Lys-359 the chain carries N6-acetyllysine. Residues 498 to 629 (FKKGKLKPVI…LSKFIDEHAT (132 aa)) form the Thioredoxin 3 domain. A CXXC motif is present at residues 548–551 (CGHC). A disulfide bridge links Cys-548 with Cys-551. Residues 635–638 (KEEL) carry the Prevents secretion from ER motif.

The protein belongs to the protein disulfide isomerase family. In terms of assembly, part of a large chaperone multiprotein complex comprising DNAJB11, HSP90B1, HSPA5, HYOU, PDIA2, PDIA4, PDIA6, PPIB, SDF2L1, UGGT1 and very small amounts of ERP29, but not, or at very low levels, CALR nor CANX. Component of a complex containing at least CRELD2, MANF, MATN3 and PDIA4.

The protein localises to the endoplasmic reticulum lumen. The protein resides in the melanosome. It carries out the reaction Catalyzes the rearrangement of -S-S- bonds in proteins.. The chain is Protein disulfide-isomerase A4 (Pdia4) from Mus musculus (Mouse).